Consider the following 407-residue polypeptide: Substance-P receptor (407 aa).

The Extracellular segment spans residues 1 to 31 (MDNVLQVDSDLFPNISTNTSEPNQFVQPAWQ). Residues Asn-14 and Asn-18 are each glycosylated (N-linked (GlcNAc...) asparagine). The chain crosses the membrane as a helical span at residues 32–54 (IVLWAAAYTVIVVTSVVGNVVVM). The Cytoplasmic portion of the chain corresponds to 55–64 (WIILAHKRMR). A helical transmembrane segment spans residues 65–86 (TVTNYFLVNLAFAEASMAAFNT). Over 87 to 106 (VVNFTYAVHNEWYYGLFYCK) the chain is Extracellular. An intrachain disulfide couples Cys-105 to Cys-180. The helical transmembrane segment at 107–128 (FHNFFPIAAVFASIYSMTAVAF) threads the bilayer. Residues 129–148 (DRYMAIIHPLQPRLSATATK) lie on the Cytoplasmic side of the membrane. A helical membrane pass occupies residues 149–169 (VVICVIWVLALLLAFPQGYYS). The Extracellular segment spans residues 170–194 (TTETMPNRVVCMIEWPEHPNKIYEK). Residues 195–219 (VYHICVTVLIYFLPLLVIGYAYTVV) form a helical membrane-spanning segment. Over 220–248 (GITLWASEIPGDSSDRYHEQVSAKRKVVK) the chain is Cytoplasmic. A helical transmembrane segment spans residues 249–270 (MMIVVVCTFAICWLPFHIFFLL). Residues 271–283 (PYINPDLYLEKFI) are Extracellular-facing. A helical membrane pass occupies residues 284-308 (QQVYLAIMWLAMSSTMYNPIIYCCL). Residues 309–407 (NDRFRLGFKH…SFSFYSNMLS (99 aa)) are Cytoplasmic-facing. Cys-322 is lipidated: S-palmitoyl cysteine. The tract at residues 365 to 394 (HEEELEDGPKTTPSSLDLTSNGSSRSDSKT) is disordered. Residues 375–394 (TTPSSLDLTSNGSSRSDSKT) show a composition bias toward polar residues.

This sequence belongs to the G-protein coupled receptor 1 family. In terms of assembly, interacts with ARRB1.

Its subcellular location is the cell membrane. Its function is as follows. This is a receptor for the tachykinin neuropeptide substance P. It is probably associated with G proteins that activate a phosphatidylinositol-calcium second messenger system. This Canis lupus familiaris (Dog) protein is Substance-P receptor (TACR1).